The sequence spans 293 residues: Pyridoxal 5'-phosphate synthase subunit PdxS (293 aa).

Residue D23 participates in D-ribose 5-phosphate binding. Residue K80 is the Schiff-base intermediate with D-ribose 5-phosphate of the active site. G152 is a binding site for D-ribose 5-phosphate. R164 is a D-glyceraldehyde 3-phosphate binding site. D-ribose 5-phosphate contacts are provided by residues G213 and 234-235 (GS).

The protein belongs to the PdxS/SNZ family. As to quaternary structure, in the presence of PdxT, forms a dodecamer of heterodimers.

It carries out the reaction aldehydo-D-ribose 5-phosphate + D-glyceraldehyde 3-phosphate + L-glutamine = pyridoxal 5'-phosphate + L-glutamate + phosphate + 3 H2O + H(+). It participates in cofactor biosynthesis; pyridoxal 5'-phosphate biosynthesis. Its function is as follows. Catalyzes the formation of pyridoxal 5'-phosphate from ribose 5-phosphate (RBP), glyceraldehyde 3-phosphate (G3P) and ammonia. The ammonia is provided by the PdxT subunit. Can also use ribulose 5-phosphate and dihydroxyacetone phosphate as substrates, resulting from enzyme-catalyzed isomerization of RBP and G3P, respectively. The polypeptide is Pyridoxal 5'-phosphate synthase subunit PdxS (Syntrophus aciditrophicus (strain SB)).